Reading from the N-terminus, the 190-residue chain is Membrane protein FAM174A (190 aa).

An N-terminal signal peptide occupies residues 1–29 (MPTRRGCSGPCHFLASAFVLLLLPALNQS). 2 N-linked (GlcNAc...) asparagine glycosylation sites follow: Asn27 and Asn83. Residues 30 to 123 (VVLPSTVPRA…NPSDKPMTQR (94 aa)) lie on the Extracellular side of the membrane. The segment at 37–119 (PRAVQESKPL…AVSPNPSDKP (83 aa)) is disordered. The chain crosses the membrane as a helical span at residues 124-144 (ALTVLVVVSAAVLVYFVVRTV). Residues 145–190 (RMRRRNRKTRRYGVLDTNIENMELTPLEQDDEDDDNTLFDANHPRR) are Cytoplasmic-facing. Residues 168–190 (LTPLEQDDEDDDNTLFDANHPRR) are disordered. The span at 172–181 (EQDDEDDDNT) shows a compositional bias: acidic residues.

Belongs to the FAM174 family.

It is found in the membrane. In Rattus norvegicus (Rat), this protein is Membrane protein FAM174A (Fam174a).